We begin with the raw amino-acid sequence, 161 residues long: Small ribosomal subunit protein uS9 (161 aa).

Disordered stretches follow at residues 1-28 and 142-161; these read MAQISDSLDVAPESFSTETPNEEAPKAP and KERKKAGLKKARKAPQFSKR.

Belongs to the universal ribosomal protein uS9 family.

The protein is Small ribosomal subunit protein uS9 of Clavibacter sepedonicus (Clavibacter michiganensis subsp. sepedonicus).